Consider the following 462-residue polypeptide: tRNA pseudouridine(32) synthase, mitochondrial (462 aa).

A mitochondrion-targeting transit peptide spans 1-24 (MQRNNRLRNLFTVPVIMARQLKRN). In terms of domain architecture, S4 RNA-binding spans 127–188 (KLVDVFISEF…HEPPVTSRPI (62 aa)). Asp238 is a catalytic residue.

This sequence belongs to the pseudouridine synthase RluA family.

The protein resides in the mitochondrion. It catalyses the reaction uridine(32) in tRNA = pseudouridine(32) in tRNA. In terms of biological role, responsible for synthesis of pseudouridine from uracil-32 in mitochondrial transfer RNAs. The chain is tRNA pseudouridine(32) synthase, mitochondrial (PUS9) from Saccharomyces cerevisiae (strain ATCC 204508 / S288c) (Baker's yeast).